Consider the following 261-residue polypeptide: MPQNEYIERAQKLHGKRLDTEERARKKAAREGHKQSENAQNLRGLRAKLFAKERHAQKIQMRKAIKQHEERNVKGAPEEKDPSNPVPAYLLDRSNPTSAKALSSQIKSKRAEKAARFSVPIPKVKGISEEELFKVVKTGKKVHKKGWKRVVTKPTFVGPDFTRRPVKYERFIRPMGLRYKKANVTHPTLNVTVQLPILGVKKNPSNPLYTQLGVLSKGTIIEVNVSDLGMVTASGKIAWGRYAQITNNPENDGCLNAVLLV.

Composition is skewed to basic and acidic residues over residues 1–36 (MPQNEYIERAQKLHGKRLDTEERARKKAAREGHKQS) and 66–82 (KQHEERNVKGAPEEKDP). Disordered stretches follow at residues 1-44 (MPQN…NLRG) and 64-97 (AIKQHEERNVKGAPEEKDPSNPVPAYLLDRSNPT). A Nuclear localization signal motif is present at residues 15-22 (GKRLDTEE).

It belongs to the eukaryotic ribosomal protein eS8 family. Ribosome biogenesis protein NSA2 subfamily. In terms of assembly, component of the pre-66S ribosomal particle. Interacts with nop7 and rrp1. Interacts with rsa4 (via WD repeats).

It localises to the nucleus. It is found in the nucleolus. Its function is as follows. Involved in the biogenesis of the 60S ribosomal subunit. May play a part in the quality control of pre-60S particles. The polypeptide is Ribosome biogenesis protein nsa2 (rbg-52) (Neurospora crassa (strain ATCC 24698 / 74-OR23-1A / CBS 708.71 / DSM 1257 / FGSC 987)).